We begin with the raw amino-acid sequence, 87 residues long: UPF0367 protein P9303_26451 (87 aa).

Belongs to the UPF0367 family.

This Prochlorococcus marinus (strain MIT 9303) protein is UPF0367 protein P9303_26451.